The chain runs to 115 residues: Nitrogenase-stabilizing/protective protein NifW (115 aa).

This sequence belongs to the NifW family. As to quaternary structure, homotrimer; associates with NifD.

Functionally, may protect the nitrogenase Fe-Mo protein from oxidative damage. The polypeptide is Nitrogenase-stabilizing/protective protein NifW (Methylobacterium sp. (strain 4-46)).